Here is a 715-residue protein sequence, read N- to C-terminus: Fatty acid oxidation complex subunit alpha (715 aa).

The enoyl-CoA hydratase/isomerase stretch occupies residues 1–190 (MIYEGKAITV…KVGAVDAVVA (190 aa)). Asp-297 provides a ligand contact to substrate. Residues 312–715 (RDVKQAAVLG…MAKNGQSFFG (404 aa)) are 3-hydroxyacyl-CoA dehydrogenase. Residues Met-325, Asp-344, 401-403 (VVE), Lys-408, and Ser-430 contribute to the NAD(+) site. Catalysis depends on His-451, which acts as the For 3-hydroxyacyl-CoA dehydrogenase activity. Asn-454 contacts NAD(+). The substrate site is built by Asn-501 and Tyr-660.

This sequence in the N-terminal section; belongs to the enoyl-CoA hydratase/isomerase family. The protein in the C-terminal section; belongs to the 3-hydroxyacyl-CoA dehydrogenase family. In terms of assembly, heterotetramer of two alpha chains (FadB) and two beta chains (FadA).

It carries out the reaction a (3S)-3-hydroxyacyl-CoA + NAD(+) = a 3-oxoacyl-CoA + NADH + H(+). It catalyses the reaction a (3S)-3-hydroxyacyl-CoA = a (2E)-enoyl-CoA + H2O. The enzyme catalyses a 4-saturated-(3S)-3-hydroxyacyl-CoA = a (3E)-enoyl-CoA + H2O. The catalysed reaction is (3S)-3-hydroxybutanoyl-CoA = (3R)-3-hydroxybutanoyl-CoA. It carries out the reaction a (3Z)-enoyl-CoA = a 4-saturated (2E)-enoyl-CoA. It catalyses the reaction a (3E)-enoyl-CoA = a 4-saturated (2E)-enoyl-CoA. It functions in the pathway lipid metabolism; fatty acid beta-oxidation. Its function is as follows. Involved in the aerobic and anaerobic degradation of long-chain fatty acids via beta-oxidation cycle. Catalyzes the formation of 3-oxoacyl-CoA from enoyl-CoA via L-3-hydroxyacyl-CoA. It can also use D-3-hydroxyacyl-CoA and cis-3-enoyl-CoA as substrate. The protein is Fatty acid oxidation complex subunit alpha of Pseudomonas fluorescens (strain SBW25).